A 158-amino-acid polypeptide reads, in one-letter code: Extracellular giant hemoglobin major globin subunit A2 (158 aa).

Positions 1 to 16 (MKSLIVFACLVAYAAA) are cleaved as a signal peptide. In terms of domain architecture, Globin spans 17 to 158 (DCTSLNRLLV…MNQIVSGISG (142 aa)). An intrachain disulfide couples Cys18 to Cys148. Cys89 serves as a coordination point for hydrogen sulfide. Position 110 (His110) interacts with heme b.

The protein belongs to the globin family. The 400 kDa hemoglobin consists of a spherical 24-mer arranged as a double layer of dome-shaped dodecamers. Each dodecamer is composed of the 3-fold trimer of the tetramer A1-A2-B1-B2 having one intra-tetramer (A1-B2) disulfide bond and one inter-tetramer (B1-B2) disulfide bond per tetramer.

Its subcellular location is the secreted. In terms of biological role, the extracellular giant hemoglobin is able to bind and transport oxygen and hydrosulfide simultaneously and reversibly at two different sites. The chain is Extracellular giant hemoglobin major globin subunit A2 (ghbA2) from Oligobrachia mashikoi (Beard worm).